The primary structure comprises 181 residues: Large ribosomal subunit protein uL5 (181 aa).

It belongs to the universal ribosomal protein uL5 family. Part of the 50S ribosomal subunit; contacts the 5S rRNA and probably tRNA. Forms a bridge to the 30S subunit in the 70S ribosome.

Its function is as follows. This is one of the proteins that bind and probably mediate the attachment of the 5S RNA into the large ribosomal subunit, where it forms part of the central protuberance. In the 70S ribosome it contacts protein S13 of the 30S subunit (bridge B1b), connecting the 2 subunits; this bridge is implicated in subunit movement. May contact the P site tRNA; the 5S rRNA and some of its associated proteins might help stabilize positioning of ribosome-bound tRNAs. In Methanococcus maripaludis (strain C6 / ATCC BAA-1332), this protein is Large ribosomal subunit protein uL5.